We begin with the raw amino-acid sequence, 626 residues long: Serine/threonine-protein kinase PknH (626 aa).

At 1-403 (MSDAQDSRVG…QTPRKTNPWP (403 aa)) the chain is on the cytoplasmic side. The Protein kinase domain occupies 16-276 (YHLKRLLGRG…DLALAAHEAL (261 aa)). ATP-binding positions include 22–30 (LGRGGMGEV) and lysine 45. The active-site Proton acceptor is aspartate 139. Phosphothreonine is present on threonine 170. Positions 292–396 (QESTLPAPPK…GGPSPWAQTP (105 aa)) are disordered. Pro residues-rich tracts occupy residues 297-308 (PAPPKPVPPPTM) and 316-342 (RQPPAPPVTPPGVQPAPKPSYTPPAQP). Low complexity predominate over residues 343-355 (GPAGQRPGPTGQP). A helical membrane pass occupies residues 404–424 (LVAGAAAVVLVLVLGAIGIWI). The Extracellular portion of the chain corresponds to 425–626 (AIRPKPVQPP…AKIVDKVNKE (202 aa)). 2 disulfide bridges follow: cysteine 482–cysteine 545 and cysteine 587–cysteine 604.

The protein belongs to the protein kinase superfamily. Ser/Thr protein kinase family. Requires a divalent metal cation as cofactor. Post-translationally, autophosphorylated on threonine and serine residues. Dephosphorylated by PstP.

It is found in the cell membrane. The catalysed reaction is L-seryl-[protein] + ATP = O-phospho-L-seryl-[protein] + ADP + H(+). It carries out the reaction L-threonyl-[protein] + ATP = O-phospho-L-threonyl-[protein] + ADP + H(+). Its function is as follows. May regulate bacterial growth in response to external signals to facilitate adaptation to the host environment. The chain is Serine/threonine-protein kinase PknH (pknH) from Mycobacterium tuberculosis (strain CDC 1551 / Oshkosh).